The following is a 209-amino-acid chain: Mitochondrial import inner membrane translocase subunit Tim23 (209 aa).

The next 3 helical transmembrane spans lie at 73–93, 125–145, and 181–197; these read FELA…FGAM, ALWA…GVII, and GLTG…YNNW.

Belongs to the Tim17/Tim22/Tim23 family. Component of the TIM23 complex at least composed of TIMM23, TIMM17 (TIMM17A or TIMM17B) and TIMM50; within this complex, directly interacts with TIMM50. The complex interacts with the TIMM44 component of the PAM complex and with DNAJC15. Upon mitochondrial depolarization, interacts with PINK1; the interaction is required for PINK1 accumulation at the outer mitochondrial membrane, kinase activation by autophosphorylation and PRKN recruitement to mitochondria.

The protein resides in the mitochondrion inner membrane. Functionally, essential component of the TIM23 complex, a complex that mediates the translocation of transit peptide-containing proteins across the mitochondrial inner membrane. Has a role in the activation of stress-induced mitophagy by protecting PINK1 from OMA1-mediated degradation and facilitating its accumulation at the outer mitochondrial membrane in response to depolarization. In Homo sapiens (Human), this protein is Mitochondrial import inner membrane translocase subunit Tim23 (TIMM23).